A 185-amino-acid chain; its full sequence is Casparian strip membrane protein 2 (185 aa).

Residues 1–25 (MKAVSIEAGEGSKAKRVHGVNRGIS) lie on the Cytoplasmic side of the membrane. A helical transmembrane segment spans residues 26 to 46 (VFDLVLRIVALVGTLASAVAM). The Extracellular portion of the chain corresponds to 47-73 (GTADQALSFSTQIVNFEAQYDDIDAFK). The helical transmembrane segment at 74 to 94 (FFVVSNSITCVYLALSIPISI) threads the bilayer. Residues 95-106 (FHIIRSRAGKSR) are Cytoplasmic-facing. A helical membrane pass occupies residues 107–127 (VLLIVLDAIMLVFLTSGASAA). Over 128–160 (AAIVYLAHNGNTSTNWFSICQQYTDFCQRSAGS) the chain is Extracellular. The N-linked (GlcNAc...) asparagine glycan is linked to asparagine 138. The chain crosses the membrane as a helical span at residues 161 to 181 (LIGSFGAMALMVLLIILSSIA). Residues 182–185 (LSRR) are Cytoplasmic-facing.

The protein belongs to the Casparian strip membrane proteins (CASP) family. As to quaternary structure, homodimer and heterodimers.

The protein localises to the cell membrane. Functionally, regulates membrane-cell wall junctions and localized cell wall deposition. Required for establishment of the Casparian strip membrane domain (CSD) and the subsequent formation of Casparian strips, a cell wall modification of the root endodermis that determines an apoplastic barrier between the intraorganismal apoplasm and the extraorganismal apoplasm and prevents lateral diffusion. The sequence is that of Casparian strip membrane protein 2 from Solanum demissum (Wild potato).